A 632-amino-acid polypeptide reads, in one-letter code: Chaperone protein HtpG (632 aa).

Residues 1-343 (MSEQTINNKE…SNDLALNVSR (343 aa)) form an a; substrate-binding region. The segment at 344–560 (EILQDNKVTQ…DFEMGTQMAK (217 aa)) is b. The c stretch occupies residues 561–632 (LLEAAGQAAP…LSAMNQLLSK (72 aa)).

This sequence belongs to the heat shock protein 90 family. Homodimer.

Its subcellular location is the cytoplasm. Its function is as follows. Molecular chaperone. Has ATPase activity. In Aliivibrio salmonicida (strain LFI1238) (Vibrio salmonicida (strain LFI1238)), this protein is Chaperone protein HtpG.